The sequence spans 317 residues: Ribosomal protein L11 methyltransferase (317 aa).

S-adenosyl-L-methionine is bound by residues threonine 158, glycine 179, aspartate 201, and asparagine 244.

The protein belongs to the methyltransferase superfamily. PrmA family.

It is found in the cytoplasm. It catalyses the reaction L-lysyl-[protein] + 3 S-adenosyl-L-methionine = N(6),N(6),N(6)-trimethyl-L-lysyl-[protein] + 3 S-adenosyl-L-homocysteine + 3 H(+). Functionally, methylates ribosomal protein L11. The sequence is that of Ribosomal protein L11 methyltransferase from Streptococcus pyogenes serotype M5 (strain Manfredo).